Here is a 411-residue protein sequence, read N- to C-terminus: Translation initiation factor 2 subunit gamma (411 aa).

The region spanning 9 to 201 (QPTVNIGMVG…AIEKYIPTPE (193 aa)) is the tr-type G domain. The interval 18–25 (GHVDHGKS) is G1. The Mg(2+) site is built by Asp-21, Ser-25, Gly-46, and Ser-48. 21-26 (DHGKST) is a binding site for GTP. The interval 46–50 (GISIK) is G2. The tract at residues 88–91 (DAPG) is G3. Residues 144-147 (NKID) and 179-181 (SAY) each bind GTP. The segment at 144–147 (NKID) is G4. Residues 179–181 (SAY) are G5.

This sequence belongs to the TRAFAC class translation factor GTPase superfamily. Classic translation factor GTPase family. EIF2G subfamily. As to quaternary structure, heterotrimer composed of an alpha, a beta and a gamma chain. The cofactor is Mg(2+).

It catalyses the reaction GTP + H2O = GDP + phosphate + H(+). In terms of biological role, eIF-2 functions in the early steps of protein synthesis by forming a ternary complex with GTP and initiator tRNA. The polypeptide is Translation initiation factor 2 subunit gamma (Thermoplasma volcanium (strain ATCC 51530 / DSM 4299 / JCM 9571 / NBRC 15438 / GSS1)).